A 263-amino-acid chain; its full sequence is Phosphatidylglycerol--prolipoprotein diacylglyceryl transferase (263 aa).

Transmembrane regions (helical) follow at residues 6–26 (VIFS…VLGI), 50–70 (LLTA…VLIY), 85–105 (TWEG…AVII), and 112–132 (IPIF…LFLG). Arginine 133 provides a ligand contact to a 1,2-diacyl-sn-glycero-3-phospho-(1'-sn-glycerol). A run of 3 helical transmembrane segments spans residues 169 to 189 (LYEA…LFFL), 197 to 217 (GALT…VEFF), and 233 to 253 (MGQL…LGAL).

It belongs to the Lgt family.

The protein resides in the cell membrane. The enzyme catalyses L-cysteinyl-[prolipoprotein] + a 1,2-diacyl-sn-glycero-3-phospho-(1'-sn-glycerol) = an S-1,2-diacyl-sn-glyceryl-L-cysteinyl-[prolipoprotein] + sn-glycerol 1-phosphate + H(+). The protein operates within protein modification; lipoprotein biosynthesis (diacylglyceryl transfer). Catalyzes the transfer of the diacylglyceryl group from phosphatidylglycerol to the sulfhydryl group of the N-terminal cysteine of a prolipoprotein, the first step in the formation of mature lipoproteins. The protein is Phosphatidylglycerol--prolipoprotein diacylglyceryl transferase of Wolbachia sp. subsp. Drosophila simulans (strain wRi).